A 141-amino-acid chain; its full sequence is Sec-independent protein translocase protein TatB (141 aa).

A helical transmembrane segment spans residues 1–21 (MFGISFSELLLVGLVALLVLG). Positions 74 to 141 (EAQKLLAPLT…SPPSETPRNP (68 aa)) are disordered. The span at 89–115 (QETPPPAAESPAPSVPTPPPTSTPAVP) shows a compositional bias: pro residues. Over residues 116-129 (PADAAAPPAVAAST) the composition is skewed to low complexity. The span at 130 to 141 (PPSPPSETPRNP) shows a compositional bias: pro residues.

The protein belongs to the TatB family. As to quaternary structure, the Tat system comprises two distinct complexes: a TatABC complex, containing multiple copies of TatA, TatB and TatC subunits, and a separate TatA complex, containing only TatA subunits. Substrates initially bind to the TatABC complex, which probably triggers association of the separate TatA complex to form the active translocon.

Its subcellular location is the cell inner membrane. Its function is as follows. Part of the twin-arginine translocation (Tat) system that transports large folded proteins containing a characteristic twin-arginine motif in their signal peptide across membranes. Together with TatC, TatB is part of a receptor directly interacting with Tat signal peptides. TatB may form an oligomeric binding site that transiently accommodates folded Tat precursor proteins before their translocation. This Pseudomonas aeruginosa (strain ATCC 15692 / DSM 22644 / CIP 104116 / JCM 14847 / LMG 12228 / 1C / PRS 101 / PAO1) protein is Sec-independent protein translocase protein TatB.